A 511-amino-acid polypeptide reads, in one-letter code: Maturase K (511 aa).

This sequence belongs to the intron maturase 2 family. MatK subfamily.

Its subcellular location is the plastid. It is found in the chloroplast. Its function is as follows. Usually encoded in the trnK tRNA gene intron. Probably assists in splicing its own and other chloroplast group II introns. In Bromelia plumieri (Karatas), this protein is Maturase K.